The sequence spans 188 residues: Adenine phosphoribosyltransferase (188 aa).

Belongs to the purine/pyrimidine phosphoribosyltransferase family. Homodimer.

It localises to the cytoplasm. The catalysed reaction is AMP + diphosphate = 5-phospho-alpha-D-ribose 1-diphosphate + adenine. The protein operates within purine metabolism; AMP biosynthesis via salvage pathway; AMP from adenine: step 1/1. Functionally, catalyzes a salvage reaction resulting in the formation of AMP, that is energically less costly than de novo synthesis. The protein is Adenine phosphoribosyltransferase of Burkholderia multivorans (strain ATCC 17616 / 249).